The primary structure comprises 388 residues: uncharacterized protein (388 aa).

8 consecutive transmembrane segments (helical) span residues 15–37 (VISAFLSISLFEGFVILTLLLVL), 97–119 (GFSKIFPKLLLGISLILLPVVFY), 129–151 (PIWGGTFEVGFFYALFSITTFLL), 158–175 (FIYIPLFLLFLAVIFLSA), 179–196 (MMLAFFVIFYLILFVLFK), 203–225 (LAFWSVNFLIILSFIGGYVYLSQ), 304–326 (IFIVSEFIERGILGLLGILYIYF), and 347–369 (LLSVPLGLHLIQSVFTFFWDALL).

Its subcellular location is the cell membrane. This is an uncharacterized protein from Aquifex aeolicus (strain VF5).